Here is a 220-residue protein sequence, read N- to C-terminus: MSNTATDFVRFALDEGVLRFGSFKVKSGRMSPYFFNAGLFNSGRSVGKLAAFYAQALLDSGLNFDMLFGPAYKGIPLATATAVALAGHPQASGDIPFAYNRKEAKDHGEGGTLVGAPLAGRVVIIDDVITAGTSVRESVEIIRAAGAQPAAVLIAMDRMERAGPDEALSPHSAVQDVAKTYGIPVISIASLADILQLLQDDEQFAAHRDSVLAYREQYGV.

Lys-26 is a binding site for 5-phospho-alpha-D-ribose 1-diphosphate. Position 34 to 35 (34 to 35 (FF)) interacts with orotate. 5-phospho-alpha-D-ribose 1-diphosphate contacts are provided by residues 72 to 73 (YK), Arg-101, Lys-102, Lys-105, His-107, and 126 to 134 (DDVITAGTS). Orotate is bound by residues Thr-130 and Arg-158.

This sequence belongs to the purine/pyrimidine phosphoribosyltransferase family. PyrE subfamily. As to quaternary structure, homodimer. It depends on Mg(2+) as a cofactor.

It catalyses the reaction orotidine 5'-phosphate + diphosphate = orotate + 5-phospho-alpha-D-ribose 1-diphosphate. It functions in the pathway pyrimidine metabolism; UMP biosynthesis via de novo pathway; UMP from orotate: step 1/2. Its function is as follows. Catalyzes the transfer of a ribosyl phosphate group from 5-phosphoribose 1-diphosphate to orotate, leading to the formation of orotidine monophosphate (OMP). In Bordetella avium (strain 197N), this protein is Orotate phosphoribosyltransferase.